The following is a 355-amino-acid chain: Chorismate synthase (355 aa).

Arg-48 contacts NADP(+). Residues 125–127 (RSS), 238–239 (NA), Gly-278, 293–297 (KPASS), and Arg-319 each bind FMN.

The protein belongs to the chorismate synthase family. As to quaternary structure, homotetramer. FMNH2 is required as a cofactor.

The enzyme catalyses 5-O-(1-carboxyvinyl)-3-phosphoshikimate = chorismate + phosphate. It functions in the pathway metabolic intermediate biosynthesis; chorismate biosynthesis; chorismate from D-erythrose 4-phosphate and phosphoenolpyruvate: step 7/7. Functionally, catalyzes the anti-1,4-elimination of the C-3 phosphate and the C-6 proR hydrogen from 5-enolpyruvylshikimate-3-phosphate (EPSP) to yield chorismate, which is the branch point compound that serves as the starting substrate for the three terminal pathways of aromatic amino acid biosynthesis. This reaction introduces a second double bond into the aromatic ring system. This Baumannia cicadellinicola subsp. Homalodisca coagulata protein is Chorismate synthase.